Reading from the N-terminus, the 631-residue chain is Pescadillo homolog (631 aa).

One can recognise a BRCT domain in the interval 321–414 (RLRTLFKGLK…QLLPTNDYFL (94 aa)). Basic and acidic residues predominate over residues 428-442 (SKRDSYIPPEEKALH). Disordered stretches follow at residues 428–471 (SKRD…EADQ) and 489–560 (YKKY…EVDE). A phosphoserine mark is found at serine 453 and serine 457. 2 stretches are compositionally biased toward acidic residues: residues 453–471 (SEEE…EADQ) and 498–525 (VNED…EDVD). Over residues 526–538 (EQTKRKQQEKEKM) the composition is skewed to basic and acidic residues. The span at 544-553 (KVHKVNKRQV) shows a compositional bias: basic residues. Residues 593-629 (LRKKRRNIDADTKEAKKAAKREARKLAAEAAARAAKL) adopt a coiled-coil conformation.

Belongs to the pescadillo family.

It localises to the nucleus. Its subcellular location is the nucleolus. The protein localises to the nucleoplasm. Required for maturation of ribosomal RNAs and formation of the large ribosomal subunit. The chain is Pescadillo homolog from Drosophila persimilis (Fruit fly).